Consider the following 661-residue polypeptide: Putative core protein L410 (661 aa).

Over residues 1-11 (MADNKGRRDTF) the composition is skewed to basic and acidic residues. The segment at 1 to 26 (MADNKGRRDTFDVSGDTNTNATSNKR) is disordered. Residues 15–25 (GDTNTNATSNK) are compositionally biased toward polar residues. Positions 112-140 (KKENKWSDKEYDEFRKELTNLLTGNRALE) form a coiled coil.

The protein resides in the virion. This is Putative core protein L410 from Acanthamoeba polyphaga (Amoeba).